We begin with the raw amino-acid sequence, 546 residues long: Intermembrane transport protein PqiB (546 aa).

Topologically, residues 1–15 (MESNNGEAKIQKVKN) are cytoplasmic. Residues 16–36 (WSPVWIFPIVTALIGAWVLFY) form a helical membrane-spanning segment. The Periplasmic portion of the chain corresponds to 37-546 (HYSHQGPEVT…KDPEPKRAKQ (510 aa)). MCE/MlaD regions lie at residues 42 to 133 (GPEV…LQPG), 158 to 217 (IRVI…NNVR), and 285 to 389 (HIDY…LDFY). A coiled-coil region spans residues 437–464 (IEQATSTLSESQRTMKNLQTTLDSMNKI).

Belongs to the PqiB family. In terms of assembly, homohexamer. May form a complex composed of PqiA, PqiB and PqiC. Interacts with PqiC.

Its subcellular location is the cell inner membrane. Functionally, forms a tunnel that spans the entire periplasmic space. Could be implicated in lipid transport between the inner membrane and the outer membrane. Binds phospholipids. Required for outer membrane homeostasis. Contributes to membrane integrity. In Escherichia coli (strain K12), this protein is Intermembrane transport protein PqiB.